Consider the following 128-residue polypeptide: Aspartate 1-decarboxylase (128 aa).

S25 functions as the Schiff-base intermediate with substrate; via pyruvic acid in the catalytic mechanism. S25 bears the Pyruvic acid (Ser) mark. T57 provides a ligand contact to substrate. Y58 functions as the Proton donor in the catalytic mechanism. 73-75 (GAA) serves as a coordination point for substrate.

It belongs to the PanD family. As to quaternary structure, heterooctamer of four alpha and four beta subunits. It depends on pyruvate as a cofactor. Is synthesized initially as an inactive proenzyme, which is activated by self-cleavage at a specific serine bond to produce a beta-subunit with a hydroxyl group at its C-terminus and an alpha-subunit with a pyruvoyl group at its N-terminus.

Its subcellular location is the cytoplasm. The catalysed reaction is L-aspartate + H(+) = beta-alanine + CO2. It participates in cofactor biosynthesis; (R)-pantothenate biosynthesis; beta-alanine from L-aspartate: step 1/1. Catalyzes the pyruvoyl-dependent decarboxylation of aspartate to produce beta-alanine. This is Aspartate 1-decarboxylase from Staphylococcus epidermidis (strain ATCC 35984 / DSM 28319 / BCRC 17069 / CCUG 31568 / BM 3577 / RP62A).